We begin with the raw amino-acid sequence, 31 residues long: Cytochrome b6-f complex subunit 6 (31 aa).

A helical membrane pass occupies residues 4–24; that stretch reads ITSYFGFLLAALTITSVLFIG.

This sequence belongs to the PetL family. The 4 large subunits of the cytochrome b6-f complex are cytochrome b6, subunit IV (17 kDa polypeptide, PetD), cytochrome f and the Rieske protein, while the 4 small subunits are PetG, PetL, PetM and PetN. The complex functions as a dimer.

The protein resides in the plastid. It is found in the chloroplast thylakoid membrane. In terms of biological role, component of the cytochrome b6-f complex, which mediates electron transfer between photosystem II (PSII) and photosystem I (PSI), cyclic electron flow around PSI, and state transitions. PetL is important for photoautotrophic growth as well as for electron transfer efficiency and stability of the cytochrome b6-f complex. The polypeptide is Cytochrome b6-f complex subunit 6 (Lepidium virginicum (Virginia pepperweed)).